The chain runs to 634 residues: Ras and EF-hand domain-containing protein homolog (634 aa).

2 consecutive EF-hand domains span residues 5–33 and 33–68; these read DVEN…CPQL and LDDN…TVQH. Ca(2+)-binding residues include Asp-46, Asp-48, Ser-50, Lys-52, and Glu-57. Residues 169–310 adopt a coiled-coil conformation; it reads LSEKKHENER…RADFDQKQDE (142 aa). 2 disordered regions span residues 216–237 and 308–328; these read ERER…EMSE and QDEL…SESV. Residues 449–454, 552–555, and 585–586 each bind GTP; these read AVGKSS, NKVD, and AL. A propeptide spans 632–634 (removed in mature form); that stretch reads RGS.

The protein belongs to the small GTPase superfamily. Rab family. Homodimer.

It is found in the cytoplasm. The protein localises to the perinuclear region. In terms of biological role, binds GTP and GDP. Plays a role in uterine seam cell development. In Caenorhabditis briggsae, this protein is Ras and EF-hand domain-containing protein homolog.